The chain runs to 101 residues: MVSLSHYLVLGAVLFAIGVVGIFLNRKNVIILLMSIELMLLAVNINFVAFSYYLQDIAGQIFVFFILTVAAAEAAIGLAILVALFRNIRTINVDDLDRLKG.

Transmembrane regions (helical) follow at residues 4 to 24 (LSHY…GIFL), 30 to 50 (IILL…FVAF), and 61 to 81 (IFVF…LAIL).

It belongs to the complex I subunit 4L family. NDH-1 is composed of 14 different subunits. Subunits NuoA, H, J, K, L, M, N constitute the membrane sector of the complex.

It is found in the cell inner membrane. The catalysed reaction is a quinone + NADH + 5 H(+)(in) = a quinol + NAD(+) + 4 H(+)(out). Functionally, NDH-1 shuttles electrons from NADH, via FMN and iron-sulfur (Fe-S) centers, to quinones in the respiratory chain. The immediate electron acceptor for the enzyme in this species is believed to be ubiquinone. Couples the redox reaction to proton translocation (for every two electrons transferred, four hydrogen ions are translocated across the cytoplasmic membrane), and thus conserves the redox energy in a proton gradient. This is NADH-quinone oxidoreductase subunit K from Nitrosomonas eutropha (strain DSM 101675 / C91 / Nm57).